The chain runs to 98 residues: Small ribosomal subunit protein bS6 (98 aa).

The protein belongs to the bacterial ribosomal protein bS6 family.

Binds together with bS18 to 16S ribosomal RNA. The polypeptide is Small ribosomal subunit protein bS6 (Staphylococcus epidermidis (strain ATCC 35984 / DSM 28319 / BCRC 17069 / CCUG 31568 / BM 3577 / RP62A)).